Consider the following 239-residue polypeptide: Phosphoribosylaminoimidazole-succinocarboxamide synthase (239 aa).

The protein belongs to the SAICAR synthetase family.

The enzyme catalyses 5-amino-1-(5-phospho-D-ribosyl)imidazole-4-carboxylate + L-aspartate + ATP = (2S)-2-[5-amino-1-(5-phospho-beta-D-ribosyl)imidazole-4-carboxamido]succinate + ADP + phosphate + 2 H(+). The protein operates within purine metabolism; IMP biosynthesis via de novo pathway; 5-amino-1-(5-phospho-D-ribosyl)imidazole-4-carboxamide from 5-amino-1-(5-phospho-D-ribosyl)imidazole-4-carboxylate: step 1/2. The chain is Phosphoribosylaminoimidazole-succinocarboxamide synthase from Nitratiruptor sp. (strain SB155-2).